The chain runs to 167 residues: SsrA-binding protein (167 aa).

Residues 139–167 (QAHDKRHAEKEREWQRDKQRIMRAHNRNA) are disordered. Positions 144 to 158 (RHAEKEREWQRDKQR) are enriched in basic and acidic residues.

Belongs to the SmpB family.

It localises to the cytoplasm. Required for rescue of stalled ribosomes mediated by trans-translation. Binds to transfer-messenger RNA (tmRNA), required for stable association of tmRNA with ribosomes. tmRNA and SmpB together mimic tRNA shape, replacing the anticodon stem-loop with SmpB. tmRNA is encoded by the ssrA gene; the 2 termini fold to resemble tRNA(Ala) and it encodes a 'tag peptide', a short internal open reading frame. During trans-translation Ala-aminoacylated tmRNA acts like a tRNA, entering the A-site of stalled ribosomes, displacing the stalled mRNA. The ribosome then switches to translate the ORF on the tmRNA; the nascent peptide is terminated with the 'tag peptide' encoded by the tmRNA and targeted for degradation. The ribosome is freed to recommence translation, which seems to be the essential function of trans-translation. The chain is SsrA-binding protein from Xylella fastidiosa (strain M23).